The following is a 578-amino-acid chain: Proline--tRNA ligase (578 aa).

This sequence belongs to the class-II aminoacyl-tRNA synthetase family. ProS type 1 subfamily. As to quaternary structure, homodimer.

The protein localises to the cytoplasm. It catalyses the reaction tRNA(Pro) + L-proline + ATP = L-prolyl-tRNA(Pro) + AMP + diphosphate. In terms of biological role, catalyzes the attachment of proline to tRNA(Pro) in a two-step reaction: proline is first activated by ATP to form Pro-AMP and then transferred to the acceptor end of tRNA(Pro). As ProRS can inadvertently accommodate and process non-cognate amino acids such as alanine and cysteine, to avoid such errors it has two additional distinct editing activities against alanine. One activity is designated as 'pretransfer' editing and involves the tRNA(Pro)-independent hydrolysis of activated Ala-AMP. The other activity is designated 'posttransfer' editing and involves deacylation of mischarged Ala-tRNA(Pro). The misacylated Cys-tRNA(Pro) is not edited by ProRS. The protein is Proline--tRNA ligase of Burkholderia ambifaria (strain MC40-6).